The sequence spans 212 residues: Uridine kinase (212 aa).

13-20 (GASASGKS) provides a ligand contact to ATP.

The protein belongs to the uridine kinase family.

It is found in the cytoplasm. The catalysed reaction is uridine + ATP = UMP + ADP + H(+). The enzyme catalyses cytidine + ATP = CMP + ADP + H(+). The protein operates within pyrimidine metabolism; CTP biosynthesis via salvage pathway; CTP from cytidine: step 1/3. It functions in the pathway pyrimidine metabolism; UMP biosynthesis via salvage pathway; UMP from uridine: step 1/1. This is Uridine kinase from Psychromonas ingrahamii (strain DSM 17664 / CCUG 51855 / 37).